A 411-amino-acid chain; its full sequence is Z-DNA-binding protein 1 (411 aa).

2 Z-binding domains span residues 8–70 (LSTG…SIGG) and 84–148 (SSAQ…HSRQ). Residues K17 and K43 each participate in a glycyl lysine isopeptide (Lys-Gly) (interchain with G-Cter in ubiquitin) cross-link. The tract at residues 60–86 (SPEPATWSIGGAASGDGAPAIPENSSA) is disordered. 2 consecutive short sequence motifs (RIP homotypic interaction motif (RHIM)) follow at residues 188–205 (NSNA…REKA) and 237–261 (YIYM…LVGD). Disordered stretches follow at residues 263-303 (GKHP…EGDT) and 332-411 (KGEV…LSKQ). 3 stretches are compositionally biased toward polar residues: residues 268-292 (YSFS…NMQT), 350-371 (GTSS…SMLP), and 400-411 (IESSQDTGLSKQ).

Homodimer. Interacts (via RIP homotypic interaction motif) with RIPK3; leading to RIPK3 activation and necroptosis; interaction is enhanced by CASP6. Interacts (via RIP homotypic interaction motif) with RIPK1. Component of the AIM2 PANoptosome complex, a multiprotein complex that drives inflammatory cell death (PANoptosis). In terms of assembly, (Microbial infection) Interacts (via RIP homotypic interaction motif) with murid herpesvirus protein RIR1 (via RIP homotypic interaction motif); leading to inhibition of ZBP1-dependent necroptosis. As to quaternary structure, (Microbial infection) Interacts with vaccinia virus E3 protein; leading to inhibit ZBP1-dependent necroptosis. Ubiquitinated; polyubiquitinated following influenza A virus (IAV) infection. In terms of processing, phosphorylated. As to expression, expressed in lung, spleen and liver. Lower levels were seen in heart, kidney and testis. Expression is greatly up-regulated in tumor stromal cells and activated macrophages.

The protein resides in the cytoplasm. It is found in the nucleus. With respect to regulation, ZBP1-dependent necroptosis is normally inhibited by RIPK1: RIPK1 inhibits the ZBP1-induced activation of RIPK3 via FADD-mediated recruitment of CASP8, which cleaves RIPK1 and limits TNF-induced necroptosis. Functionally, key innate sensor that recognizes and binds Z-RNA structures, which are produced by a number of viruses, such as herpesvirus, orthomyxovirus or flavivirus, and triggers different forms of cell death. ZBP1 acts as an essential mediator of pyroptosis, necroptosis and apoptosis (PANoptosis), an integral part of host defense against pathogens, by activating RIPK3, caspase-8 (CASP8), and the NLRP3 inflammasome. Key activator of necroptosis, a programmed cell death process in response to death-inducing TNF-alpha family members, via its ability to bind Z-RNA: once activated upon Z-RNA-binding, ZBP1 interacts and stimulates RIPK3 kinase, which phosphorylates and activates MLKL, triggering execution of programmed necrosis. In addition to TNF-induced necroptosis, necroptosis can also take place in the nucleus in response to orthomyxoviruses infection: ZBP1 recognizes and binds Z-RNA structures that are produced in infected nuclei by orthomyxoviruses, such as the influenza A virus (IAV), leading to ZBP1 activation, RIPK3 stimulation and subsequent MLKL phosphorylation, triggering disruption of the nuclear envelope and leakage of cellular DNA into the cytosol. ZBP1-dependent cell death in response to IAV infection promotes interleukin-1 alpha (IL1A) induction in an NLRP3-inflammasome-independent manner: IL1A expression is required for the optimal interleukin-1 beta (IL1B) production, and together, these cytokines promote infiltration of inflammatory neutrophils to the lung, leading to the formation of neutrophil extracellular traps. In addition to its direct role in driving necroptosis via its ability to sense Z-RNAs, also involved in PANoptosis triggered in response to bacterial infection: component of the AIM2 PANoptosome complex, a multiprotein complex that triggers PANoptosis. Also acts as the apical sensor of fungal infection responsible for activating PANoptosis. Involved in CASP8-mediated cell death via its interaction with RIPK1 but independently of its ability to sense Z-RNAs. In some cell types, also able to restrict viral replication by promoting cell death-independent responses. In response to flavivirus infection in neurons, promotes a cell death-independent pathway that restricts viral replication: together with RIPK3, promotes a death-independent transcriptional program that modifies the cellular metabolism via up-regulation expression of the enzyme ACOD1/IRG1 and production of the metabolite itaconate. Itaconate inhibits the activity of succinate dehydrogenase, generating a metabolic state in neurons that suppresses replication of viral genomes. This is Z-DNA-binding protein 1 from Mus musculus (Mouse).